Here is a 127-residue protein sequence, read N- to C-terminus: Glycine cleavage system H protein (127 aa).

The 83-residue stretch at 22–104 (KARIGITHFA…YEKAWMIVVE (83 aa)) folds into the Lipoyl-binding domain. K63 bears the N6-lipoyllysine mark.

The protein belongs to the GcvH family. In terms of assembly, the glycine cleavage system is composed of four proteins: P, T, L and H. Requires (R)-lipoate as cofactor.

Its function is as follows. The glycine cleavage system catalyzes the degradation of glycine. The H protein shuttles the methylamine group of glycine from the P protein to the T protein. Functionally, is also involved in protein lipoylation via its role as an octanoyl/lipoyl carrier protein intermediate. This chain is Glycine cleavage system H protein, found in Bacillus subtilis (strain 168).